The following is a 159-amino-acid chain: Ribosomal RNA large subunit methyltransferase H (159 aa).

S-adenosyl-L-methionine-binding positions include leucine 76, glycine 108, and 127 to 132 (FGKLTM).

It belongs to the RNA methyltransferase RlmH family. Homodimer.

It localises to the cytoplasm. The enzyme catalyses pseudouridine(1915) in 23S rRNA + S-adenosyl-L-methionine = N(3)-methylpseudouridine(1915) in 23S rRNA + S-adenosyl-L-homocysteine + H(+). In terms of biological role, specifically methylates the pseudouridine at position 1915 (m3Psi1915) in 23S rRNA. In Lacticaseibacillus casei (strain BL23) (Lactobacillus casei), this protein is Ribosomal RNA large subunit methyltransferase H.